The following is a 702-amino-acid chain: Solute carrier organic anion transporter family member 1B3 (702 aa).

The Cytoplasmic segment spans residues 1–28 (MDQHQHLNKTAESASSEKKKTRRCNGFK). Residues 29–48 (MFLAALSFSYIAKALGGIIM) form a helical membrane-spanning segment. The Extracellular segment spans residues 49–67 (KISITQIERRFDISSSLAG). The helical transmembrane segment at 68-88 (LIDGSFEIGNLLVIVFVSYFG) threads the bilayer. Over 89 to 94 (SKLHRP) the chain is Cytoplasmic. A helical membrane pass occupies residues 95 to 119 (KLIGIGCLLMGTGSILTSLPHFFMG). The Extracellular portion of the chain corresponds to 120-168 (YYRYSKETHINPSENSTSSLSTCLINQTLSFNGTSPEIVEKDCVKESGS). Residues Asn134, Asn145, and Asn151 are each glycosylated (N-linked (GlcNAc...) asparagine). Residues 169-197 (HMWIYVFMGNMLRGIGETPIVPLGISYID) form a helical membrane-spanning segment. The Cytoplasmic segment spans residues 198 to 216 (DFAKEGHSSLYLGSLNAIG). The chain crosses the membrane as a helical span at residues 217-237 (MIGPVIGFALGSLFAKMYVDI). The Extracellular portion of the chain corresponds to 238–255 (GYVDLSTIRITPKDSRWV). Residues 256–280 (GAWWLGFLVSGLFSIISSIPFFFLP) form a helical membrane-spanning segment. The Cytoplasmic portion of the chain corresponds to 281-331 (KNPNKPQKERKISLSLHVLKTNDDRNQTANLTNQGKNVTKNVTGFFQSLKS). Residues Ser293 and Ser295 each carry the phosphoserine modification. The chain crosses the membrane as a helical span at residues 332 to 353 (ILTNPLYVIFLLLTLLQVSSFI). At 354–373 (GSFTYVFKYMEQQYGQSASH) the chain is on the extracellular side. Residues 374 to 397 (ANFLLGIITIPTVATGMFLGGFII) form a helical membrane-spanning segment. Topologically, residues 398-401 (KKFK) are cytoplasmic. Residues 402–425 (LSLVGIAKFSFLTSMISFLFQLLY) traverse the membrane as a helical segment. Residues 426–537 (FPLICESKSV…NTCTRKFFIY (112 aa)) lie on the Extracellular side of the membrane. N-linked (GlcNAc...) asparagine glycosylation is present at Asn445. In terms of domain architecture, Kazal-like spans 453–508 (DVPLSYCNSECNCDESQWEPVCGNNGITYLSPCLAGCKSSSGIKKHTVFYNCSCVE). Disulfide bonds link Cys459-Cys489, Cys465-Cys485, and Cys474-Cys506. Asn503 and Asn516 each carry an N-linked (GlcNAc...) asparagine glycan. A helical transmembrane segment spans residues 538–560 (VAIQVINSLFSATGGTTFILLTV). The Cytoplasmic portion of the chain corresponds to 561-569 (KIVQPELKA). Residues 570–595 (LAMGFQSMVIRTLGGILAPIYFGALI) traverse the membrane as a helical segment. At 596–629 (DKTCMKWSTNSCGAQGACRIYNSVFFGRVYLGLS) the chain is on the extracellular side. The helical transmembrane segment at 630–647 (IALRFPALVLYIVFIFAM) threads the bilayer. At 648-695 (KKKFQGKDTKASDNERKVMDEANLEFLNNGEHFVPSAGTDSKTCNLDM) the chain is on the cytoplasmic side. Phosphoserine is present on Ser683.

The protein belongs to the organo anion transporter (TC 2.A.60) family. Post-translationally, N-glycosylated. In terms of tissue distribution, highly expressed in liver, in particular at the basolateral membrane of hepatocytes near the central vein. Expressed in the placenta. In testis, primarily localized to the basal membrane of Sertoli cells and weakly expressed in Leydig cells and within the tubules.

The protein localises to the basolateral cell membrane. Its subcellular location is the basal cell membrane. It catalyses the reaction estrone 3-sulfate(out) + hydrogencarbonate(in) = estrone 3-sulfate(in) + hydrogencarbonate(out). The enzyme catalyses 17beta-estradiol 17-O-(beta-D-glucuronate)(out) = 17beta-estradiol 17-O-(beta-D-glucuronate)(in). It carries out the reaction taurocholate(out) = taurocholate(in). The catalysed reaction is estrone 3-sulfate(out) = estrone 3-sulfate(in). It catalyses the reaction dehydroepiandrosterone 3-sulfate(out) = dehydroepiandrosterone 3-sulfate(in). The enzyme catalyses leukotriene C4(out) = leukotriene C4(in). It carries out the reaction L-thyroxine(out) = L-thyroxine(in). The catalysed reaction is prostaglandin E2(out) = prostaglandin E2(in). It catalyses the reaction (4E,15E)-bilirubin IXalpha C8-beta-D-glucuronoside(out) = (4E,15E)-bilirubin IXalpha C8-beta-D-glucuronoside(in). The enzyme catalyses bilirubin IXalpha bis-beta-D-glucuronoside(out) = bilirubin IXalpha bis-beta-D-glucuronoside(in). Mediates the Na(+)-independent uptake of organic anions. Shows broad substrate specificity, can transport both organic anions such as bile acid taurocholate (cholyltaurine) and conjugated steroids (17-beta-glucuronosyl estradiol, dehydroepiandrosterone sulfate (DHEAS), and estrone 3-sulfate), as well as eicosanoid leukotriene C4, prostaglandin E2 and L-thyroxine (T4). Hydrogencarbonate/HCO3(-) acts as the probable counteranion that exchanges for organic anions. Shows a pH-sensitive substrate specificity towards sulfated steroids, taurocholate and T4 which may be ascribed to the protonation state of the binding site and leads to a stimulation of substrate transport in an acidic microenvironment. Involved in the clearance of bile acids and organic anions from the liver. Can take up bilirubin glucuronides from plasma into the liver, contributing to the detoxification-enhancing liver-blood shuttling loop. Transports coproporphyrin I and III, by-products of heme synthesis, and may be involved in their hepatic disposition. May contribute to regulate the transport of organic compounds in testes across the blood-testis-barrier. Can transport HMG-CoA reductase inhibitors (also known as statins) such as pitavastatin, a clinically important class of hypolipidemic drugs. May play an important role in plasma and tissue distribution of the structurally diverse chemotherapeutic drugs methotrexate and paclitaxel. May also transport antihypertension agents, such as the angiotensin-converting enzyme (ACE) inhibitor prodrug enalapril, and the highly selective angiotensin II AT1-receptor antagonist valsartan, in the liver. The chain is Solute carrier organic anion transporter family member 1B3 (SLCO1B3) from Homo sapiens (Human).